The following is a 164-amino-acid chain: C-type natriuretic peptide (164 aa).

A signal peptide spans 1 to 23 (MVASRLAAGGLLLLALLALALDG). Disordered stretches follow at residues 24–93 (KPAP…AAAA) and 115–134 (HPEH…GASR). Positions 24-142 (KPAPPQPLRK…SRRLKGVAKK (119 aa)) are excised as a propeptide. Positions 58-67 (AGGGGGGGRS) are enriched in gly residues. Positions 68–93 (GSKAANAAPTAPKSKGGAAAAAAAAA) are enriched in low complexity. The span at 121–132 (GGGGGGGGGGGA) shows a compositional bias: gly residues. C148 and C164 form a disulfide bridge.

Belongs to the natriuretic peptide family. Expressed by the venom gland.

The protein resides in the secreted. In terms of biological role, snake venom natriuretic peptide that has a vasorelaxant activity in rat aortic strips and a diuretic potency in anesthetized rats. May act by activating natriuretic receptors (NPR1 and/or NPR2). In Philodryas olfersii (Green snake), this protein is C-type natriuretic peptide.